The chain runs to 311 residues: Aspartate carbamoyltransferase catalytic subunit (311 aa).

Positions 55 and 56 each coordinate carbamoyl phosphate. Residue lysine 85 participates in L-aspartate binding. The carbamoyl phosphate site is built by arginine 106, histidine 135, and glutamine 138. L-aspartate contacts are provided by arginine 168 and arginine 230. Residues leucine 268 and proline 269 each contribute to the carbamoyl phosphate site.

The protein belongs to the aspartate/ornithine carbamoyltransferase superfamily. ATCase family. As to quaternary structure, heterododecamer (2C3:3R2) of six catalytic PyrB chains organized as two trimers (C3), and six regulatory PyrI chains organized as three dimers (R2).

The enzyme catalyses carbamoyl phosphate + L-aspartate = N-carbamoyl-L-aspartate + phosphate + H(+). The protein operates within pyrimidine metabolism; UMP biosynthesis via de novo pathway; (S)-dihydroorotate from bicarbonate: step 2/3. Functionally, catalyzes the condensation of carbamoyl phosphate and aspartate to form carbamoyl aspartate and inorganic phosphate, the committed step in the de novo pyrimidine nucleotide biosynthesis pathway. This chain is Aspartate carbamoyltransferase catalytic subunit, found in Klebsiella pneumoniae subsp. pneumoniae (strain ATCC 700721 / MGH 78578).